A 199-amino-acid polypeptide reads, in one-letter code: Recombination protein RecR (199 aa).

The segment at C56–C71 adopts a C4-type zinc-finger fold. The region spanning S79–P174 is the Toprim domain.

The protein belongs to the RecR family.

In terms of biological role, may play a role in DNA repair. It seems to be involved in an RecBC-independent recombinational process of DNA repair. It may act with RecF and RecO. This Streptomyces coelicolor (strain ATCC BAA-471 / A3(2) / M145) protein is Recombination protein RecR.